The sequence spans 70 residues: UPF0270 protein VS_2853 (70 aa).

The protein belongs to the UPF0270 family.

This Vibrio atlanticus (strain LGP32) (Vibrio splendidus (strain Mel32)) protein is UPF0270 protein VS_2853.